The sequence spans 274 residues: 2,3,4,5-tetrahydropyridine-2,6-dicarboxylate N-succinyltransferase (274 aa).

The protein belongs to the transferase hexapeptide repeat family.

It localises to the cytoplasm. The enzyme catalyses (S)-2,3,4,5-tetrahydrodipicolinate + succinyl-CoA + H2O = (S)-2-succinylamino-6-oxoheptanedioate + CoA. Its pathway is amino-acid biosynthesis; L-lysine biosynthesis via DAP pathway; LL-2,6-diaminopimelate from (S)-tetrahydrodipicolinate (succinylase route): step 1/3. This is 2,3,4,5-tetrahydropyridine-2,6-dicarboxylate N-succinyltransferase from Escherichia coli (strain SMS-3-5 / SECEC).